We begin with the raw amino-acid sequence, 183 residues long: Dual-action ribosomal maturation protein DarP (183 aa).

Belongs to the DarP family.

The protein resides in the cytoplasm. Functionally, member of a network of 50S ribosomal subunit biogenesis factors which assembles along the 30S-50S interface, preventing incorrect 23S rRNA structures from forming. Promotes peptidyl transferase center (PTC) maturation. In Citrobacter koseri (strain ATCC BAA-895 / CDC 4225-83 / SGSC4696), this protein is Dual-action ribosomal maturation protein DarP.